We begin with the raw amino-acid sequence, 409 residues long: Cdc42 effector protein 1 (409 aa).

Residues 1 to 29 are disordered; that stretch reads MPGPQGGTGAPTMSLGKLSPVGWVSSSHG. Phosphoserine is present on residues Ser19 and Ser27. The residue at position 34 (Thr34) is a Phosphothreonine. The CRIB domain occupies 38–52; it reads ISPPLGDFRHTMHVG. Phosphoserine is present on Ser39. At Arg53 the chain carries Omega-N-methylarginine. A phosphoserine mark is found at Ser65, Ser77, Ser101, Ser113, Ser121, and Ser139. The span at 167–189 shows a compositional bias: basic and acidic residues; the sequence is PRVEKHSNRDRDRDPDHSQDREQ. The tract at residues 167–203 is disordered; sequence PRVEKHSNRDRDRDPDHSQDREQSSFPSEPTPNPELR. Residues Ser191, Ser205, Ser207, and Ser210 each carry the phosphoserine modification. Repeat copies occupy residues 235-241, 242-248, and 255-261. The tract at residues 235-284 is 3 X 7 AA tandem repeats of [PT]-[AT]-A-[ENT]-[PT]-[PTS]-[AG]; sequence PAAETPVPTANPPAPAANPAPTAKPPAHAITTLDAVTSLPASAVTSLPAP. 2 disordered regions span residues 237–260 and 282–329; these read AETPVPTANPPAPAANPAPTAKPP and PAPA…FDRH. Over residues 243-258 the composition is skewed to pro residues; that stretch reads TANPPAPAANPAPTAK. Low complexity predominate over residues 282-291; it reads PAPAAASSPS. A phosphoserine mark is found at Ser312, Ser332, Ser368, and Ser371.

It belongs to the BORG/CEP family. In terms of assembly, interacts with RHOQ and CDC42, in a GTP-dependent manner.

The protein resides in the endomembrane system. The protein localises to the cytoplasm. Its subcellular location is the cytoskeleton. In terms of biological role, probably involved in the organization of the actin cytoskeleton. Induced membrane extensions in fibroblasts. The polypeptide is Cdc42 effector protein 1 (Cdc42ep1) (Mus musculus (Mouse)).